The sequence spans 331 residues: Glycerol-3-phosphate dehydrogenase [NAD(P)+] (331 aa).

NADPH is bound by residues Ser11, Phe12, Arg32, and Lys106. The sn-glycerol 3-phosphate site is built by Lys106, Gly134, and Ser136. Residue Ala138 participates in NADPH binding. Residues Lys189, Asp242, Ser252, Arg253, and Asn254 each contribute to the sn-glycerol 3-phosphate site. Residue Lys189 is the Proton acceptor of the active site. Arg253 lines the NADPH pocket. 2 residues coordinate NADPH: Val277 and Glu279.

It belongs to the NAD-dependent glycerol-3-phosphate dehydrogenase family.

The protein resides in the cytoplasm. It catalyses the reaction sn-glycerol 3-phosphate + NAD(+) = dihydroxyacetone phosphate + NADH + H(+). The catalysed reaction is sn-glycerol 3-phosphate + NADP(+) = dihydroxyacetone phosphate + NADPH + H(+). Its pathway is membrane lipid metabolism; glycerophospholipid metabolism. Its function is as follows. Catalyzes the reduction of the glycolytic intermediate dihydroxyacetone phosphate (DHAP) to sn-glycerol 3-phosphate (G3P), the key precursor for phospholipid synthesis. The protein is Glycerol-3-phosphate dehydrogenase [NAD(P)+] of Clostridium perfringens (strain SM101 / Type A).